We begin with the raw amino-acid sequence, 65 residues long: Large ribosomal subunit protein bL35 (65 aa).

This sequence belongs to the bacterial ribosomal protein bL35 family.

The chain is Large ribosomal subunit protein bL35 from Desulfitobacterium hafniense (strain DSM 10664 / DCB-2).